A 786-amino-acid chain; its full sequence is Endonuclease MutS2 (786 aa).

334–341 contributes to the ATP binding site; the sequence is GPNTGGKT. Residues 711-786 enclose the Smr domain; sequence LDLRGERYEN…GNGATVVYFK (76 aa).

It belongs to the DNA mismatch repair MutS family. MutS2 subfamily. Homodimer. Binds to stalled ribosomes, contacting rRNA.

Its function is as follows. Endonuclease that is involved in the suppression of homologous recombination and thus may have a key role in the control of bacterial genetic diversity. Acts as a ribosome collision sensor, splitting the ribosome into its 2 subunits. Detects stalled/collided 70S ribosomes which it binds and splits by an ATP-hydrolysis driven conformational change. Acts upstream of the ribosome quality control system (RQC), a ribosome-associated complex that mediates the extraction of incompletely synthesized nascent chains from stalled ribosomes and their subsequent degradation. Probably generates substrates for RQC. The protein is Endonuclease MutS2 of Ligilactobacillus salivarius (strain UCC118) (Lactobacillus salivarius).